A 466-amino-acid chain; its full sequence is UDP-N-acetylglucosamine--dolichyl-phosphate N-acetylglucosaminephosphotransferase (466 aa).

The helical transmembrane segment at Ala-12–Val-32 threads the bilayer. Asp-57 lines the UDP-N-acetyl-alpha-D-glucosamine pocket. Asn-59 carries N-linked (GlcNAc...) asparagine glycosylation. UDP-N-acetyl-alpha-D-glucosamine is bound at residue Glu-90. 2 helical membrane passes run Ser-91–Leu-111 and Pro-124–Val-144. Residue Lys-155 participates in dolichyl phosphate binding. 2 consecutive transmembrane segments (helical) span residues Ile-156 to Val-176 and Gly-236 to Phe-256. A dolichyl phosphate-binding site is contributed by Ile-255–Ile-263. Residue Asn-262 coordinates Mg(2+). Helical transmembrane passes span Ile-263 to Val-283, Asp-316 to Trp-336, Val-345 to Thr-365, and Leu-374 to Val-394. Asn-268 is a binding site for UDP-N-acetyl-alpha-D-glucosamine. Asp-349 contacts Mg(2+). Arg-398–Arg-400 contributes to the UDP-N-acetyl-alpha-D-glucosamine binding site. N-linked (GlcNAc...) asparagine glycosylation occurs at Asn-416. The helical transmembrane segment at Cys-442 to Tyr-462 threads the bilayer.

It belongs to the glycosyltransferase 4 family. The cofactor is Mg(2+).

The protein resides in the endoplasmic reticulum membrane. The enzyme catalyses a di-trans,poly-cis-dolichyl phosphate + UDP-N-acetyl-alpha-D-glucosamine = an N-acetyl-alpha-D-glucosaminyl-diphospho-di-trans,poly-cis-dolichol + UMP. Its pathway is protein modification; protein glycosylation. Inhibited by natural nucleoside antibiotic tunicamycin, which acts as a structural analog and competitor of UDP-GlcNAc. In terms of biological role, UDP-N-acetylglucosamine--dolichyl-phosphate N-acetylglucosaminephosphotransferase that operates in the biosynthetic pathway of dolichol-linked oligosaccharides, the glycan precursors employed in protein asparagine (N)-glycosylation. The assembly of dolichol-linked oligosaccharides begins on the cytosolic side of the endoplasmic reticulum membrane and finishes in its lumen. The sequential addition of sugars to dolichol pyrophosphate produces dolichol-linked oligosaccharides containing fourteen sugars, including two GlcNAcs, nine mannoses and three glucoses. Once assembled, the oligosaccharide is transferred from the lipid to nascent proteins by oligosaccharyltransferases. Catalyzes the initial step of dolichol-linked oligosaccharide biosynthesis, transfering GlcNAc-1-P from cytosolic UDP-GlcNAc onto the carrier lipid dolichyl phosphate (P-dolichol), yielding GlcNAc-P-P-dolichol embedded in the cytoplasmic leaflet of the endoplasmic reticulum membrane. The polypeptide is UDP-N-acetylglucosamine--dolichyl-phosphate N-acetylglucosaminephosphotransferase (NAGT) (Leishmania amazonensis).